The following is a 254-amino-acid chain: Gamma-glutamyl-gamma-aminobutyrate hydrolase PuuD (254 aa).

The region spanning 16 to 250 (RNRLKGHATQ…ITACQHHIAE (235 aa)) is the Glutamine amidotransferase type-1 domain. Cysteine 114 (nucleophile) is an active-site residue. Residues histidine 222 and glutamate 224 contribute to the active site.

It belongs to the peptidase C26 family. Homodimer.

It carries out the reaction 4-(gamma-L-glutamylamino)butanoate + H2O = 4-aminobutanoate + L-glutamate. Its pathway is amine and polyamine degradation; putrescine degradation; 4-aminobutanoate from putrescine: step 4/4. Its function is as follows. Involved in the breakdown of putrescine via hydrolysis of the gamma-glutamyl linkage of gamma-glutamyl-gamma-aminobutyrate. The protein is Gamma-glutamyl-gamma-aminobutyrate hydrolase PuuD (puuD) of Escherichia coli (strain K12).